A 226-amino-acid chain; its full sequence is Putative integrase V10 (226 aa).

Active-site residues include Arg-97, His-174, and Arg-177. Residue Tyr-210 is the O-(3'-phospho-DNA)-tyrosine intermediate of the active site.

This sequence belongs to the 'phage' integrase family.

Its function is as follows. May catalyze site-specific integration of viral genome into host or helper virus DNA. The protein is Putative integrase V10 of Acanthamoeba polyphaga (Amoeba).